A 205-amino-acid polypeptide reads, in one-letter code: Holliday junction resolvase RecU (205 aa).

Residues M1–T22 form a disordered region. Residues T90, D92, D105, and Q124 each coordinate Mg(2+).

This sequence belongs to the RecU family. Mg(2+) is required as a cofactor.

The protein localises to the cytoplasm. It carries out the reaction Endonucleolytic cleavage at a junction such as a reciprocal single-stranded crossover between two homologous DNA duplexes (Holliday junction).. Its function is as follows. Endonuclease that resolves Holliday junction intermediates in genetic recombination. Cleaves mobile four-strand junctions by introducing symmetrical nicks in paired strands. Promotes annealing of linear ssDNA with homologous dsDNA. Required for DNA repair, homologous recombination and chromosome segregation. The sequence is that of Holliday junction resolvase RecU from Leuconostoc citreum (strain KM20).